The chain runs to 232 residues: Ubiquinone biosynthesis O-methyltransferase (232 aa).

Positions 36, 55, 76, and 120 each coordinate S-adenosyl-L-methionine.

Belongs to the methyltransferase superfamily. UbiG/COQ3 family.

The enzyme catalyses a 3-demethylubiquinol + S-adenosyl-L-methionine = a ubiquinol + S-adenosyl-L-homocysteine + H(+). It catalyses the reaction a 3-(all-trans-polyprenyl)benzene-1,2-diol + S-adenosyl-L-methionine = a 2-methoxy-6-(all-trans-polyprenyl)phenol + S-adenosyl-L-homocysteine + H(+). It functions in the pathway cofactor biosynthesis; ubiquinone biosynthesis. In terms of biological role, O-methyltransferase that catalyzes the 2 O-methylation steps in the ubiquinone biosynthetic pathway. In Pseudomonas fluorescens (strain Pf0-1), this protein is Ubiquinone biosynthesis O-methyltransferase.